The primary structure comprises 140 residues: Nucleoside diphosphate kinase (140 aa).

Lys11, Phe59, Arg87, Thr93, Arg104, and Asn114 together coordinate ATP. The active-site Pros-phosphohistidine intermediate is His117.

The protein belongs to the NDK family. In terms of assembly, homotetramer. It depends on Mg(2+) as a cofactor.

The protein resides in the cytoplasm. It carries out the reaction a 2'-deoxyribonucleoside 5'-diphosphate + ATP = a 2'-deoxyribonucleoside 5'-triphosphate + ADP. The catalysed reaction is a ribonucleoside 5'-diphosphate + ATP = a ribonucleoside 5'-triphosphate + ADP. In terms of biological role, major role in the synthesis of nucleoside triphosphates other than ATP. The ATP gamma phosphate is transferred to the NDP beta phosphate via a ping-pong mechanism, using a phosphorylated active-site intermediate. The sequence is that of Nucleoside diphosphate kinase from Agrobacterium fabrum (strain C58 / ATCC 33970) (Agrobacterium tumefaciens (strain C58)).